We begin with the raw amino-acid sequence, 145 residues long: D-aminoacyl-tRNA deacylase (145 aa).

The short motif at 137 to 138 is the Gly-cisPro motif, important for rejection of L-amino acids element; the sequence is GP.

Belongs to the DTD family. In terms of assembly, homodimer.

The protein localises to the cytoplasm. It catalyses the reaction glycyl-tRNA(Ala) + H2O = tRNA(Ala) + glycine + H(+). The enzyme catalyses a D-aminoacyl-tRNA + H2O = a tRNA + a D-alpha-amino acid + H(+). Its function is as follows. An aminoacyl-tRNA editing enzyme that deacylates mischarged D-aminoacyl-tRNAs. Also deacylates mischarged glycyl-tRNA(Ala), protecting cells against glycine mischarging by AlaRS. Acts via tRNA-based rather than protein-based catalysis; rejects L-amino acids rather than detecting D-amino acids in the active site. By recycling D-aminoacyl-tRNA to D-amino acids and free tRNA molecules, this enzyme counteracts the toxicity associated with the formation of D-aminoacyl-tRNA entities in vivo and helps enforce protein L-homochirality. This Pelobacter propionicus (strain DSM 2379 / NBRC 103807 / OttBd1) protein is D-aminoacyl-tRNA deacylase.